The sequence spans 309 residues: 15-cis-phytoene synthase (309 aa).

A disordered region spans residues Leu290–Leu309.

The protein belongs to the phytoene/squalene synthase family. ATP serves as cofactor. Mn(2+) is required as a cofactor. Requires Mg(2+) as cofactor.

The enzyme catalyses 2 (2E,6E,10E)-geranylgeranyl diphosphate = 15-cis-phytoene + 2 diphosphate. It participates in carotenoid biosynthesis; phytoene biosynthesis. Its activity is regulated as follows. Inhibited by phosphate ions and squalestatin. Its function is as follows. Involved in the biosynthesis of carotenoids. Catalyzes the condensation of two molecules of geranylgeranyl diphosphate (GGPP) to give prephytoene diphosphate (PPPP) and the subsequent rearrangement of the cyclopropylcarbinyl intermediate to yield the 15-cis-phytoene isomer. The sequence is that of 15-cis-phytoene synthase (crtB) from Pantoea ananas (Erwinia uredovora).